A 213-amino-acid chain; its full sequence is MARYIGPKLKLSRREGTDLGLKSGVKPYDVKTKKSARPPGQHGVSRNKSSEYSLQLREKQKVKRIYGVLERQFANYYKEAARKRGATGENLLAMLESRLDNVVYRMGFGSTRAEARQLVSHRTVMVKKAGRDEFIRVNIPSIQLQDGDVIAIQEKSREQLRIKNAIELATQRGIPEWLDVDHSKLQGTFKKAPDRIDLPAEINESLIVELYSK.

The segment at Gly16 to Ser53 is disordered. Residues Val44–Ser53 are compositionally biased toward polar residues. Residues Ser97 to Lys163 form the S4 RNA-binding domain.

Belongs to the universal ribosomal protein uS4 family. Part of the 30S ribosomal subunit. Contacts protein S5. The interaction surface between S4 and S5 is involved in control of translational fidelity.

One of the primary rRNA binding proteins, it binds directly to 16S rRNA where it nucleates assembly of the body of the 30S subunit. In terms of biological role, with S5 and S12 plays an important role in translational accuracy. The sequence is that of Small ribosomal subunit protein uS4 from Psychrobacter cryohalolentis (strain ATCC BAA-1226 / DSM 17306 / VKM B-2378 / K5).